We begin with the raw amino-acid sequence, 795 residues long: Protein translocase subunit SecA 2 (795 aa).

ATP-binding positions include Gln-84, 102–106, and Asp-496; that span reads GEGKT.

It belongs to the SecA family. In terms of assembly, monomer and homodimer. Part of the essential Sec protein translocation apparatus which comprises SecA, SecYEG and auxiliary proteins SecDF. Other proteins may also be involved.

It localises to the cell membrane. Its subcellular location is the cytoplasm. The enzyme catalyses ATP + H2O + cellular proteinSide 1 = ADP + phosphate + cellular proteinSide 2.. Part of the Sec protein translocase complex. Interacts with the SecYEG preprotein conducting channel. Has a central role in coupling the hydrolysis of ATP to the transfer of proteins into and across the cell membrane, serving as an ATP-driven molecular motor driving the stepwise translocation of polypeptide chains across the membrane. The polypeptide is Protein translocase subunit SecA 2 (Streptococcus agalactiae serotype III (strain NEM316)).